A 168-amino-acid polypeptide reads, in one-letter code: Putative peroxiredoxin prxA (168 aa).

In terms of domain architecture, Thioredoxin spans 4-158; sequence LKAGDSFPAD…LEPAKNHLEF (155 aa). Catalysis depends on cysteine 61, which acts as the Cysteine sulfenic acid (-SOH) intermediate.

This sequence belongs to the peroxiredoxin family. Prx5 subfamily. In terms of assembly, homodimer; disulfide-linked, upon oxidation. Interacts with thioredoxin trxA.

The enzyme catalyses a hydroperoxide + [thioredoxin]-dithiol = an alcohol + [thioredoxin]-disulfide + H2O. Functionally, thiol-specific peroxidase that catalyzes the reduction of hydrogen peroxide and organic hydroperoxides to water and alcohols, respectively. Plays a role in cell protection against oxidative stress by detoxifying peroxides and as sensor of hydrogen peroxide-mediated signaling events. Involved in osmoadaptation. This Emericella nidulans (strain FGSC A4 / ATCC 38163 / CBS 112.46 / NRRL 194 / M139) (Aspergillus nidulans) protein is Putative peroxiredoxin prxA.